The chain runs to 927 residues: Isoleucine--tRNA ligase (927 aa).

Positions 57 to 67 (PFANGNIHMGH) match the 'HIGH' region motif. Residue E553 coordinates L-isoleucyl-5'-AMP. Positions 594–598 (KMSKS) match the 'KMSKS' region motif. K597 contributes to the ATP binding site. C886, C889, C906, and C909 together coordinate Zn(2+).

It belongs to the class-I aminoacyl-tRNA synthetase family. IleS type 1 subfamily. Monomer. Requires Zn(2+) as cofactor.

The protein localises to the cytoplasm. It catalyses the reaction tRNA(Ile) + L-isoleucine + ATP = L-isoleucyl-tRNA(Ile) + AMP + diphosphate. Functionally, catalyzes the attachment of isoleucine to tRNA(Ile). As IleRS can inadvertently accommodate and process structurally similar amino acids such as valine, to avoid such errors it has two additional distinct tRNA(Ile)-dependent editing activities. One activity is designated as 'pretransfer' editing and involves the hydrolysis of activated Val-AMP. The other activity is designated 'posttransfer' editing and involves deacylation of mischarged Val-tRNA(Ile). The polypeptide is Isoleucine--tRNA ligase (Lactobacillus helveticus (strain DPC 4571)).